Consider the following 240-residue polypeptide: Aspartate/glutamate leucyltransferase (240 aa).

It belongs to the R-transferase family. Bpt subfamily.

The protein localises to the cytoplasm. It catalyses the reaction N-terminal L-glutamyl-[protein] + L-leucyl-tRNA(Leu) = N-terminal L-leucyl-L-glutamyl-[protein] + tRNA(Leu) + H(+). The catalysed reaction is N-terminal L-aspartyl-[protein] + L-leucyl-tRNA(Leu) = N-terminal L-leucyl-L-aspartyl-[protein] + tRNA(Leu) + H(+). In terms of biological role, functions in the N-end rule pathway of protein degradation where it conjugates Leu from its aminoacyl-tRNA to the N-termini of proteins containing an N-terminal aspartate or glutamate. In Bordetella avium (strain 197N), this protein is Aspartate/glutamate leucyltransferase.